The sequence spans 156 residues: Small ribosomal subunit protein uS7 (156 aa).

It belongs to the universal ribosomal protein uS7 family. In terms of assembly, part of the 30S ribosomal subunit. Contacts proteins S9 and S11.

In terms of biological role, one of the primary rRNA binding proteins, it binds directly to 16S rRNA where it nucleates assembly of the head domain of the 30S subunit. Is located at the subunit interface close to the decoding center, probably blocks exit of the E-site tRNA. This chain is Small ribosomal subunit protein uS7, found in Nitrosomonas europaea (strain ATCC 19718 / CIP 103999 / KCTC 2705 / NBRC 14298).